The primary structure comprises 148 residues: Deoxyuridine 5'-triphosphate nucleotidohydrolase (148 aa).

Substrate is bound by residues 67–69 (RSG), N80, 84–86 (TID), and K94.

It belongs to the dUTPase family. Mg(2+) is required as a cofactor.

The catalysed reaction is dUTP + H2O = dUMP + diphosphate + H(+). It functions in the pathway pyrimidine metabolism; dUMP biosynthesis; dUMP from dCTP (dUTP route): step 2/2. Functionally, this enzyme is involved in nucleotide metabolism: it produces dUMP, the immediate precursor of thymidine nucleotides and it decreases the intracellular concentration of dUTP so that uracil cannot be incorporated into DNA. The sequence is that of Deoxyuridine 5'-triphosphate nucleotidohydrolase from Orientia tsutsugamushi (strain Ikeda) (Rickettsia tsutsugamushi).